Consider the following 152-residue polypeptide: Transcription elongation factor Spt5 (152 aa).

The KOW domain occupies 98-127 (EGDLVEVVSGPFRGMQAQVVKVTEGKGEVV).

It belongs to the archaeal Spt5 family. As to quaternary structure, heterodimer composed of Spt4 and Spt5. Interacts with RNA polymerase (RNAP).

Stimulates transcription elongation. In Acidianus ambivalens (Desulfurolobus ambivalens), this protein is Transcription elongation factor Spt5.